A 288-amino-acid chain; its full sequence is ATP synthase gamma chain (288 aa).

It belongs to the ATPase gamma chain family. In terms of assembly, F-type ATPases have 2 components, CF(1) - the catalytic core - and CF(0) - the membrane proton channel. CF(1) has five subunits: alpha(3), beta(3), gamma(1), delta(1), epsilon(1). CF(0) has three main subunits: a, b and c.

The protein localises to the cell inner membrane. In terms of biological role, produces ATP from ADP in the presence of a proton gradient across the membrane. The gamma chain is believed to be important in regulating ATPase activity and the flow of protons through the CF(0) complex. The polypeptide is ATP synthase gamma chain (Laribacter hongkongensis (strain HLHK9)).